Reading from the N-terminus, the 101-residue chain is uncharacterized protein (101 aa).

Residues 68 to 90 form a helical membrane-spanning segment; it reads LAFAFCGRANTFISCFISFASLI.

The protein resides in the membrane. This is an uncharacterized protein from Saccharomyces cerevisiae (strain ATCC 204508 / S288c) (Baker's yeast).